The primary structure comprises 321 residues: Glucokinase (321 aa).

Residue 8-13 coordinates ATP; sequence GDVGGT.

It belongs to the bacterial glucokinase family.

The protein resides in the cytoplasm. The catalysed reaction is D-glucose + ATP = D-glucose 6-phosphate + ADP + H(+). This chain is Glucokinase, found in Salmonella agona (strain SL483).